Consider the following 146-residue polypeptide: MDERFIAYIPTAGSNVAHAEITSPTLVKMMIRRAKKPILILGENLEENEKELISKLIEKFNLKTIKTPEEMNLMAIMKYLASSDYDLALFTGITYYYLAQAATHLKQFSNVVTISIDKYYQPNTLYSFPNLSKEEYLDYLRKLLEG.

Belongs to the CdhB family. In terms of assembly, heterotetramer of two alpha and two epsilon subunits. The ACDS complex is made up of alpha, epsilon, beta, gamma and delta subunits with a probable stoichiometry of (alpha(2)epsilon(2))(4)-beta(8)-(gamma(1)delta(1))(8).

In terms of biological role, part of a complex that catalyzes the reversible cleavage of acetyl-CoA, allowing autotrophic growth from CO(2). The alpha-epsilon subcomponent functions as a carbon monoxide dehydrogenase. The precise role of the epsilon subunit is unclear; it may have a stabilizing role within the alpha(2)epsilon(2) component and/or be involved in electron transfer to FAD during a potential FAD-mediated CO oxidation. The protein is Acetyl-CoA decarbonylase/synthase complex subunit epsilon of Methanocaldococcus jannaschii (strain ATCC 43067 / DSM 2661 / JAL-1 / JCM 10045 / NBRC 100440) (Methanococcus jannaschii).